The chain runs to 270 residues: Putative pyruvate, phosphate dikinase regulatory protein (270 aa).

150 to 157 is a binding site for ADP; that stretch reads GPSRTSKS.

Belongs to the pyruvate, phosphate/water dikinase regulatory protein family. PDRP subfamily.

The enzyme catalyses N(tele)-phospho-L-histidyl/L-threonyl-[pyruvate, phosphate dikinase] + ADP = N(tele)-phospho-L-histidyl/O-phospho-L-threonyl-[pyruvate, phosphate dikinase] + AMP + H(+). The catalysed reaction is N(tele)-phospho-L-histidyl/O-phospho-L-threonyl-[pyruvate, phosphate dikinase] + phosphate + H(+) = N(tele)-phospho-L-histidyl/L-threonyl-[pyruvate, phosphate dikinase] + diphosphate. Functionally, bifunctional serine/threonine kinase and phosphorylase involved in the regulation of the pyruvate, phosphate dikinase (PPDK) by catalyzing its phosphorylation/dephosphorylation. This Neorickettsia sennetsu (strain ATCC VR-367 / Miyayama) (Ehrlichia sennetsu) protein is Putative pyruvate, phosphate dikinase regulatory protein.